A 120-amino-acid chain; its full sequence is UPF0231 protein YacL (120 aa).

This sequence belongs to the UPF0231 family.

This is UPF0231 protein YacL from Escherichia coli O139:H28 (strain E24377A / ETEC).